A 374-amino-acid polypeptide reads, in one-letter code: Peptide chain release factor 2 (374 aa).

The residue at position 249 (Gln-249) is an N5-methylglutamine.

Belongs to the prokaryotic/mitochondrial release factor family. In terms of processing, methylated by PrmC. Methylation increases the termination efficiency of RF2.

It localises to the cytoplasm. In terms of biological role, peptide chain release factor 2 directs the termination of translation in response to the peptide chain termination codons UGA and UAA. This chain is Peptide chain release factor 2, found in Ruegeria sp. (strain TM1040) (Silicibacter sp.).